A 100-amino-acid chain; its full sequence is Aspartyl/glutamyl-tRNA(Asn/Gln) amidotransferase subunit C (100 aa).

This sequence belongs to the GatC family. Heterotrimer of A, B and C subunits.

The catalysed reaction is L-glutamyl-tRNA(Gln) + L-glutamine + ATP + H2O = L-glutaminyl-tRNA(Gln) + L-glutamate + ADP + phosphate + H(+). The enzyme catalyses L-aspartyl-tRNA(Asn) + L-glutamine + ATP + H2O = L-asparaginyl-tRNA(Asn) + L-glutamate + ADP + phosphate + 2 H(+). Its function is as follows. Allows the formation of correctly charged Asn-tRNA(Asn) or Gln-tRNA(Gln) through the transamidation of misacylated Asp-tRNA(Asn) or Glu-tRNA(Gln) in organisms which lack either or both of asparaginyl-tRNA or glutaminyl-tRNA synthetases. The reaction takes place in the presence of glutamine and ATP through an activated phospho-Asp-tRNA(Asn) or phospho-Glu-tRNA(Gln). The chain is Aspartyl/glutamyl-tRNA(Asn/Gln) amidotransferase subunit C from Rickettsia rickettsii (strain Sheila Smith).